Reading from the N-terminus, the 219-residue chain is 2-hydroxy-3-keto-5-methylthiopentenyl-1-phosphate phosphatase (219 aa).

This sequence belongs to the HAD-like hydrolase superfamily. MtnX family.

The enzyme catalyses 2-hydroxy-5-methylsulfanyl-3-oxopent-1-enyl phosphate + H2O = 1,2-dihydroxy-5-(methylsulfanyl)pent-1-en-3-one + phosphate. It participates in amino-acid biosynthesis; L-methionine biosynthesis via salvage pathway; L-methionine from S-methyl-5-thio-alpha-D-ribose 1-phosphate: step 4/6. Its function is as follows. Dephosphorylates 2-hydroxy-3-keto-5-methylthiopentenyl-1-phosphate (HK-MTPenyl-1-P) yielding 1,2-dihydroxy-3-keto-5-methylthiopentene (DHK-MTPene). This chain is 2-hydroxy-3-keto-5-methylthiopentenyl-1-phosphate phosphatase, found in Bacillus cereus (strain AH187).